Reading from the N-terminus, the 860-residue chain is Leucine--tRNA ligase (860 aa).

The 'HIGH' region motif lies at 42-52 (PYPSGRLHMGH). The 'KMSKS' region motif lies at 619 to 623 (KMSKS). Residue K622 participates in ATP binding.

This sequence belongs to the class-I aminoacyl-tRNA synthetase family.

It localises to the cytoplasm. It catalyses the reaction tRNA(Leu) + L-leucine + ATP = L-leucyl-tRNA(Leu) + AMP + diphosphate. This Pectobacterium carotovorum subsp. carotovorum (strain PC1) protein is Leucine--tRNA ligase.